Here is a 117-residue protein sequence, read N- to C-terminus: Large ribosomal subunit protein bL20 (117 aa).

It belongs to the bacterial ribosomal protein bL20 family.

Its function is as follows. Binds directly to 23S ribosomal RNA and is necessary for the in vitro assembly process of the 50S ribosomal subunit. It is not involved in the protein synthesizing functions of that subunit. This is Large ribosomal subunit protein bL20 from Geotalea daltonii (strain DSM 22248 / JCM 15807 / FRC-32) (Geobacter daltonii).